Here is an 84-residue protein sequence, read N- to C-terminus: Small ribosomal subunit protein bS18 (84 aa).

Belongs to the bacterial ribosomal protein bS18 family. Part of the 30S ribosomal subunit. Forms a tight heterodimer with protein bS6.

In terms of biological role, binds as a heterodimer with protein bS6 to the central domain of the 16S rRNA, where it helps stabilize the platform of the 30S subunit. In Mycoplasma mobile (strain ATCC 43663 / 163K / NCTC 11711) (Mesomycoplasma mobile), this protein is Small ribosomal subunit protein bS18.